The sequence spans 331 residues: Probable allantoicase (331 aa).

It belongs to the allantoicase family.

It carries out the reaction allantoate + H2O = (S)-ureidoglycolate + urea. The protein operates within nitrogen metabolism; (S)-allantoin degradation; (S)-ureidoglycolate from allantoate (aminidohydrolase route): step 1/1. This is Probable allantoicase from Pseudomonas syringae pv. tomato (strain ATCC BAA-871 / DC3000).